The following is a 283-amino-acid chain: MQQFPRLARVGLGFRRELIPALKSGVPATIDFFEIAPENWIDLGGGAARDLLFFTERYPFVCHGLSLSIGGPAPLDEILLQKIRQFLDQHRVLLYTEHLSYCSDDGHLYDLLPIPFTEEAVKYVAERVRRTQDILERRIALENASFYVASPISDMSELDFIRAVLLEADCDLHLDVNNVYVNSINHDYDPVDFIRALPSDRIVYMHMAGHHKEAENLIIDTHGADVIDPVWSLLDQTYGMHGVAPTLLERDFNIPPLEQLMREVLHIALIQAQHADSGDASAT.

The protein belongs to the UPF0276 family.

The chain is UPF0276 protein Nmul_A2550 from Nitrosospira multiformis (strain ATCC 25196 / NCIMB 11849 / C 71).